Here is a 162-residue protein sequence, read N- to C-terminus: UPF0460 protein y4xD (162 aa).

This sequence belongs to the UPF0460 family.

The sequence is that of UPF0460 protein y4xD from Sinorhizobium fredii (strain NBRC 101917 / NGR234).